Reading from the N-terminus, the 301-residue chain is 4-hydroxy-tetrahydrodipicolinate synthase (301 aa).

Position 46 (threonine 46) interacts with pyruvate. The active-site Proton donor/acceptor is the tyrosine 135. Lysine 163 functions as the Schiff-base intermediate with substrate in the catalytic mechanism. Position 205 (isoleucine 205) interacts with pyruvate.

Belongs to the DapA family. Homotetramer; dimer of dimers.

It localises to the cytoplasm. It carries out the reaction L-aspartate 4-semialdehyde + pyruvate = (2S,4S)-4-hydroxy-2,3,4,5-tetrahydrodipicolinate + H2O + H(+). Its pathway is amino-acid biosynthesis; L-lysine biosynthesis via DAP pathway; (S)-tetrahydrodipicolinate from L-aspartate: step 3/4. Catalyzes the condensation of (S)-aspartate-beta-semialdehyde [(S)-ASA] and pyruvate to 4-hydroxy-tetrahydrodipicolinate (HTPA). In Lacticaseibacillus casei (strain BL23) (Lactobacillus casei), this protein is 4-hydroxy-tetrahydrodipicolinate synthase.